A 267-amino-acid polypeptide reads, in one-letter code: GTP cyclohydrolase FolE2 (267 aa).

Belongs to the GTP cyclohydrolase IV family.

The enzyme catalyses GTP + H2O = 7,8-dihydroneopterin 3'-triphosphate + formate + H(+). It functions in the pathway cofactor biosynthesis; 7,8-dihydroneopterin triphosphate biosynthesis; 7,8-dihydroneopterin triphosphate from GTP: step 1/1. In terms of biological role, converts GTP to 7,8-dihydroneopterin triphosphate. This chain is GTP cyclohydrolase FolE2, found in Geobacter sp. (strain M21).